The following is a 285-amino-acid chain: Aquaporin PIP2-5 (285 aa).

2 helical membrane-spanning segments follow: residues 38–58 (AVIAEFVATLLFLYITVATVI) and 75–95 (CGGVGVLGIAWAFGGMIFILV). Residues 107-109 (NPA) carry the NPA 1 motif. 3 consecutive transmembrane segments (helical) span residues 126-146 (LLYIVAQCLGAICGVGLVKGF), 168-188 (GTGLAAEIIGTFVLVYTVFSA), and 202-222 (VLAPLPIGFAVFMVHLATIPI). The short motif at 228–230 (NPA) is the NPA 2 element. A helical membrane pass occupies residues 250–270 (IFWVGPFIGAAIAAAYHQYVL).

Belongs to the MIP/aquaporin (TC 1.A.8) family. PIP (TC 1.A.8.11) subfamily. As to quaternary structure, homomers. May interact with PIP1-2 to form heteromers. As to expression, specifically expressed in roots, in the exodermis, endodermis and xylem parenchyma. Polar localization to the external periclinal side of epidermal cells in root apices.

Its subcellular location is the cell membrane. Functionally, water channel required to facilitate the transport of water across cell membrane. Its function is impaired by Hg(2+). May play a role in water uptake from the root surface. Active as homomers. Increased activity when heteromerization with PIP1-2. This chain is Aquaporin PIP2-5 (PIP2-5), found in Zea mays (Maize).